We begin with the raw amino-acid sequence, 508 residues long: Protein FAM227B (508 aa).

Disordered stretches follow at residues 1–22 (MAGQRTCQRRSSRAGPGKMQEP) and 485–508 (ASLSSSSSSSPSSTDNYNFEEEEY). Residues 486-497 (SLSSSSSSSPSS) show a composition bias toward low complexity.

Belongs to the FAM227 family.

The chain is Protein FAM227B (FAM227B) from Homo sapiens (Human).